The chain runs to 349 residues: Protein O-mannose kinase (349 aa).

At 1 to 19 (MGQQHGARNGLTHRELPRG) the chain is on the cytoplasmic side. Residues 20 to 42 (MGLLLAMALMNVVLYVCLDHLFI) traverse the membrane as a helical; Signal-anchor for type II membrane protein segment. Topologically, residues 43–349 (SPGRATEDPR…TVMSQTKEML (307 aa)) are lumenal. N-linked (GlcNAc...) asparagine glycosylation is found at Asn-66, Asn-164, and Asn-219. Positions 80-349 (VRQLKLVGEG…TVMSQTKEML (270 aa)) constitute a Protein kinase domain.

This sequence belongs to the protein kinase superfamily. Ser/Thr protein kinase family. STKL subfamily.

It is found in the endoplasmic reticulum membrane. It catalyses the reaction 3-O-[beta-D-GalNAc-(1-&gt;3)-beta-D-GlcNAc-(1-&gt;4)-alpha-D-Man]-L-Thr-[protein] + ATP = 3-O-[beta-D-GalNAc-(1-&gt;3)-beta-D-GlcNAc-(1-&gt;4)-(O-6-P-alpha-D-Man)]-Thr-[protein] + ADP + H(+). In terms of biological role, protein O-mannose kinase that specifically mediates phosphorylation at the 6-position of an O-mannose of the trisaccharide (N-acetylgalactosamine (GalNAc)-beta-1,3-N-acetylglucosamine (GlcNAc)-beta-1,4-mannose) to generate phosphorylated O-mannosyl trisaccharide (N-acetylgalactosamine-beta-1,3-N-acetylglucosamine-beta-1,4-(phosphate-6-)mannose). Phosphorylated O-mannosyl trisaccharide is a carbohydrate structure present in alpha-dystroglycan (DAG1), which is required for binding laminin G-like domain-containing extracellular proteins with high affinity. Only shows kinase activity when the GalNAc-beta-3-GlcNAc-beta-terminus is linked to the 4-position of O-mannose, suggesting that this disaccharide serves as the substrate recognition motif. The protein is Protein O-mannose kinase (Pomk) of Rattus norvegicus (Rat).